A 273-amino-acid chain; its full sequence is SUMO-1 cysteine protease S273R (273 aa).

Active-site residues include H168 and N187. Q226 lines the substrate pocket. C232 serves as the catalytic Nucleophile.

It belongs to the peptidase C63 family.

It localises to the host cytoplasm. The protein resides in the virion. In terms of biological role, cysteine protease that plays several role during infection including processing of the structural polyprotein or inhibition of the host immune response. Catalyzes the maturation of the pp220 and pp62 polyprotein precursors into core-shell proteins. Plays a role in the disruption of host pyroptosis via specific cleavage of gasdermin D/GSDMD. In addition, strongly decreases the host cGAS-STING signaling by targeting IKBKE via its enzymatic activity. Also impairs host FOXJ1-mediated antiviral effect via degradation of FOXJ1. The protein is SUMO-1 cysteine protease S273R of Ornithodoros (relapsing fever ticks).